The following is a 559-amino-acid chain: DnaJ homolog subfamily C member 11 (559 aa).

Residue Ala-2 is modified to N-acetylalanine. One can recognise a J domain in the interval 14 to 82 (DYYSLLNVRR…QTRAIYDIYG (69 aa)). At Ser-204 the chain carries Phosphoserine. Residues 418-457 (KELEKQRESTATDILQKKQEAEAAVRLMQESVRRIIEAEE) adopt a coiled-coil conformation.

It belongs to the DNAJC11 family. Associates with the mitochondrial contact site and cristae organizing system (MICOS) complex, composed of at least MICOS10/MIC10, CHCHD3/MIC19, CHCHD6/MIC25, APOOL/MIC27, IMMT/MIC60, APOO/MIC23/MIC26 and QIL1/MIC13. This complex was also known under the names MINOS or MitOS complex. The MICOS complex associates with mitochondrial outer membrane proteins SAMM50, MTX1 and MTX2 (together described as components of the mitochondrial outer membrane sorting assembly machinery (SAM) complex) and DNAJC11, mitochondrial inner membrane protein TMEM11 and with HSPA9. The MICOS and SAM complexes together with DNAJC11 are part of a large protein complex spanning both membranes termed the mitochondrial intermembrane space bridging (MIB) complex.

The protein localises to the mitochondrion. It is found in the mitochondrion outer membrane. Required for mitochondrial inner membrane organization. Seems to function through its association with the MICOS complex and the mitochondrial outer membrane sorting assembly machinery (SAM) complex. The polypeptide is DnaJ homolog subfamily C member 11 (DNAJC11) (Bos taurus (Bovine)).